Consider the following 422-residue polypeptide: Cysteate synthase (422 aa).

The residue at position 105 (Lys-105) is an N6-(pyridoxal phosphate)lysine. Positions 131 and 379 each coordinate pyridoxal 5'-phosphate.

The protein belongs to the threonine synthase family. Cysteate synthase subfamily. Homotrimer. It depends on pyridoxal 5'-phosphate as a cofactor.

The enzyme catalyses O-phospho-L-serine + sulfite + H(+) = L-cysteate + phosphate. It participates in cofactor biosynthesis; coenzyme M biosynthesis. Specifically catalyzes the beta-elimination of phosphate from L-phosphoserine and the beta-addition of sulfite to the dehydroalanine intermediate to produce L-cysteate. In Methanospirillum hungatei JF-1 (strain ATCC 27890 / DSM 864 / NBRC 100397 / JF-1), this protein is Cysteate synthase.